Reading from the N-terminus, the 255-residue chain is Kallikrein-15 (255 aa).

Residues 1–15 (MWLLLPLSFLLTSTA) form the signal peptide. Positions 16-20 (QDGGK) are cleaved as a propeptide — activation peptide. Positions 21–253 (LLEGEECAPH…YVKWIRETMK (233 aa)) are serine protease. A disulfide bridge links Cys46 with Cys62. Residues His61 and Asp105 each act as charge relay system in the active site. 3 disulfides stabilise this stretch: Cys137–Cys214, Cys179–Cys193, and Cys204–Cys229. An N-linked (GlcNAc...) asparagine glycan is attached at Asn170. The Charge relay system role is filled by Ser208. Asn231 is a glycosylation site (N-linked (GlcNAc...) asparagine).

Belongs to the peptidase S1 family. Kallikrein subfamily.

Its subcellular location is the secreted. Protease whose physiological substrate is not yet known. The polypeptide is Kallikrein-15 (KLK15) (Saguinus oedipus (Cotton-top tamarin)).